The following is a 406-amino-acid chain: Glutamyl-tRNA reductase (406 aa).

Residues 51-54 (TCNR), S101, 106-108 (ESE), and Q112 each bind substrate. C52 functions as the Nucleophile in the catalytic mechanism. 180-185 (GAGSIG) contributes to the NADP(+) binding site.

The protein belongs to the glutamyl-tRNA reductase family. As to quaternary structure, homodimer.

It carries out the reaction (S)-4-amino-5-oxopentanoate + tRNA(Glu) + NADP(+) = L-glutamyl-tRNA(Glu) + NADPH + H(+). It functions in the pathway porphyrin-containing compound metabolism; protoporphyrin-IX biosynthesis; 5-aminolevulinate from L-glutamyl-tRNA(Glu): step 1/2. Its function is as follows. Catalyzes the NADPH-dependent reduction of glutamyl-tRNA(Glu) to glutamate 1-semialdehyde (GSA). The sequence is that of Glutamyl-tRNA reductase from Caldivirga maquilingensis (strain ATCC 700844 / DSM 13496 / JCM 10307 / IC-167).